Consider the following 332-residue polypeptide: L-lactate dehydrogenase A chain (332 aa).

Residues 29–57 and Arg99 each bind NAD(+); that span reads GAVGMACAISILMKDLADELTLVDVVEDK. Arg106, Asn138, and Arg169 together coordinate substrate. Asn138 contributes to the NAD(+) binding site. His193 serves as the catalytic Proton acceptor. Residue Thr248 participates in substrate binding.

The protein belongs to the LDH/MDH superfamily. LDH family. Homotetramer.

The protein localises to the cytoplasm. It carries out the reaction (S)-lactate + NAD(+) = pyruvate + NADH + H(+). The protein operates within fermentation; pyruvate fermentation to lactate; (S)-lactate from pyruvate: step 1/1. Functionally, interconverts simultaneously and stereospecifically pyruvate and lactate with concomitant interconversion of NADH and NAD(+). This is L-lactate dehydrogenase A chain (LDHA) from Gallus gallus (Chicken).